The following is a 141-amino-acid chain: Large ribosomal subunit protein uL14 (141 aa).

Belongs to the universal ribosomal protein uL14 family. As to quaternary structure, part of the 50S ribosomal subunit. Forms a cluster with proteins L3 and L24e, part of which may contact the 16S rRNA in 2 intersubunit bridges.

Functionally, binds to 23S rRNA. Forms part of two intersubunit bridges in the 70S ribosome. The protein is Large ribosomal subunit protein uL14 of Pyrococcus furiosus (strain ATCC 43587 / DSM 3638 / JCM 8422 / Vc1).